The sequence spans 495 residues: Lysine--tRNA ligase (495 aa).

Glutamate 406 and glutamate 413 together coordinate Mg(2+).

This sequence belongs to the class-II aminoacyl-tRNA synthetase family. Homodimer. Requires Mg(2+) as cofactor.

It is found in the cytoplasm. The enzyme catalyses tRNA(Lys) + L-lysine + ATP = L-lysyl-tRNA(Lys) + AMP + diphosphate. In Leptospira interrogans serogroup Icterohaemorrhagiae serovar copenhageni (strain Fiocruz L1-130), this protein is Lysine--tRNA ligase.